Here is a 1074-residue protein sequence, read N- to C-terminus: Zinc finger protein 518B (1074 aa).

Positions 12–24 (HLNGGHNSLTMSP) are enriched in polar residues. The disordered stretch occupies residues 12-36 (HLNGGHNSLTMSPKQPDANGAPRPN). 2 consecutive C2H2-type zinc fingers follow at residues 162-184 (FICSHCSYISYTKGEFQRHLVKH) and 190-213 (YQCEYCDYGAIRNDYIVKHTKRVH). Residues Lys482, Lys491, and Lys558 each participate in a glycyl lysine isopeptide (Lys-Gly) (interchain with G-Cter in SUMO2) cross-link. Residues 568 to 590 (SNRKQEDNQTEEHKAVSTVGQIS) are disordered. Residues 570–582 (RKQEDNQTEEHKA) show a composition bias toward basic and acidic residues. A Glycyl lysine isopeptide (Lys-Gly) (interchain with G-Cter in SUMO2) cross-link involves residue Lys594. 2 disordered regions span residues 603–632 (TGEDRSQQPGDKPLELKNSERTNNTNDGPV) and 678–704 (KPSSLASNSAHRRSVGQASKGTSKATS). Positions 604–622 (GEDRSQQPGDKPLELKNSE) are enriched in basic and acidic residues. A compositionally biased stretch (polar residues) spans 693-704 (GQASKGTSKATS). Glycyl lysine isopeptide (Lys-Gly) (interchain with G-Cter in SUMO2) cross-links involve residues Lys809, Lys846, and Lys860. The C2H2-type 3 zinc-finger motif lies at 1036–1058 (FKCWFCGRLYEDQEEWMSHGQRH).

Belongs to the krueppel C2H2-type zinc-finger protein family.

It is found in the nucleus. Its function is as follows. Through its association with the EHMT1-EHMT2/G9A and PRC2/EED-EZH2 histone methyltransferase complexes may function in gene silencing, regulating repressive post-translational methylation of histone tails at promoters of target genes. The polypeptide is Zinc finger protein 518B (ZNF518B) (Homo sapiens (Human)).